The sequence spans 222 residues: Protein-L-isoaspartate O-methyltransferase (222 aa).

S69 is an active-site residue.

It belongs to the methyltransferase superfamily. L-isoaspartyl/D-aspartyl protein methyltransferase family.

The protein resides in the cytoplasm. It catalyses the reaction [protein]-L-isoaspartate + S-adenosyl-L-methionine = [protein]-L-isoaspartate alpha-methyl ester + S-adenosyl-L-homocysteine. Catalyzes the methyl esterification of L-isoaspartyl residues in peptides and proteins that result from spontaneous decomposition of normal L-aspartyl and L-asparaginyl residues. It plays a role in the repair and/or degradation of damaged proteins. The polypeptide is Protein-L-isoaspartate O-methyltransferase (Caulobacter vibrioides (strain NA1000 / CB15N) (Caulobacter crescentus)).